We begin with the raw amino-acid sequence, 235 residues long: Probable inactive serine protease 37 (235 aa).

Positions 1–19 (MKFTFCLTVLAGTFFSAHS) are cleaved as a signal peptide. In terms of domain architecture, Peptidase S1 spans 20–233 (SVQKDDPSPY…YVSWIESTTK (214 aa)). 3 disulfide bridges follow: cysteine 40/cysteine 56, cysteine 131/cysteine 198, and cysteine 163/cysteine 177.

The protein belongs to the peptidase S1 family.

It is found in the cytoplasmic vesicle. Its subcellular location is the secretory vesicle. It localises to the acrosome. The protein resides in the secreted. Its function is as follows. Plays a role in male fertility. May have a role in sperm migration or binding to zona-intact eggs. Involved in the activation of the proacrosin/acrosin system. This Bos taurus (Bovine) protein is Probable inactive serine protease 37.